The primary structure comprises 428 residues: Methyl-branched lipid omega-hydroxylase (428 aa).

Cysteine 379 serves as a coordination point for heme.

This sequence belongs to the cytochrome P450 family. The cofactor is heme.

It catalyses the reaction a methyl-branched lipid + O2 + 2 reduced ferredoxin [iron-sulfur] cluster + 2 H(+) = an omega-hydroxy-methyl-branched lipid + H2O + 2 oxidized ferredoxin [iron-sulfur] cluster.. The enzyme catalyses cholest-4-en-3-one + 6 reduced [2Fe-2S]-[ferredoxin] + 3 O2 + 5 H(+) = (25R)-3-oxocholest-4-en-26-oate + 6 oxidized [2Fe-2S]-[ferredoxin] + 4 H2O. Its pathway is lipid metabolism; branched-chain fatty acid metabolism. Its function is as follows. Primarily hydroxylates the omega-carbon of a number of methyl-branched lipids, including (2E,6E)-farnesol, phytanate, geranylgeraniol, 15-methylpalmitate and (2E,6E)-farnesyl diphosphate. Also catalyzes the sequential oxidation of the terminal methyl of cholest-4-en-3-one into (25R)-26-hydroxycholest-4-en-3-one (alcohol), (25R)-26-oxocholest-4-en-3-one (aldehyde), to finally yield the carboxylic acid (25R)-3-oxocholest-4-en-26-oate. Also able to sequentially oxidize cholesterol itself, not only cholest-4-en-3-one. This chain is Methyl-branched lipid omega-hydroxylase (cyp124), found in Mycobacterium bovis (strain ATCC BAA-935 / AF2122/97).